Here is a 405-residue protein sequence, read N- to C-terminus: Sarcosine oxidase subunit beta (405 aa).

Residues glycine 31, histidine 32, glutamate 53, asparagine 61, methionine 62, threonine 66, and isoleucine 68 each coordinate FAD. Position 173 is a tele-8alpha-FMN histidine (histidine 173). Residues valine 197, glycine 354, glycine 357, and lysine 359 each contribute to the FAD site.

It belongs to the SoxB family. As to quaternary structure, heterotetramer composed of subunits alpha (SoxA), beta (SoxB), gamma (SoxG) and delta (SoxD). It depends on FAD as a cofactor. Requires FMN as cofactor.

It is found in the cytoplasm. It carries out the reaction sarcosine + (6S)-5,6,7,8-tetrahydrofolate + O2 = (6R)-5,10-methylene-5,6,7,8-tetrahydrofolate + glycine + H2O2. It catalyses the reaction sarcosine + O2 + H2O = formaldehyde + glycine + H2O2. In the presence of tetrahydrofolate, catalyzes the oxidative demethylation of sarcosine to yield glycine, 5,10-methylenetetrahydrofolate and hydrogen peroxide. In the absence of tetrahydrofolate, catalyzes the oxidative demethylation of sarcosine to yield glycine, formaldehyde and hydrogen peroxide. In Arthrobacter sp, this protein is Sarcosine oxidase subunit beta (soxB).